A 188-amino-acid polypeptide reads, in one-letter code: Xanthine phosphoribosyltransferase (188 aa).

Residues Leu-20 and Asn-27 each contribute to the xanthine site. Position 127 to 131 (127 to 131 (AYGNA)) interacts with 5-phospho-alpha-D-ribose 1-diphosphate. Lys-155 is a binding site for xanthine.

This sequence belongs to the purine/pyrimidine phosphoribosyltransferase family. Xpt subfamily. In terms of assembly, homodimer.

It is found in the cytoplasm. It catalyses the reaction XMP + diphosphate = xanthine + 5-phospho-alpha-D-ribose 1-diphosphate. It functions in the pathway purine metabolism; XMP biosynthesis via salvage pathway; XMP from xanthine: step 1/1. Its function is as follows. Converts the preformed base xanthine, a product of nucleic acid breakdown, to xanthosine 5'-monophosphate (XMP), so it can be reused for RNA or DNA synthesis. The chain is Xanthine phosphoribosyltransferase from Parabacteroides distasonis (strain ATCC 8503 / DSM 20701 / CIP 104284 / JCM 5825 / NCTC 11152).